The following is a 213-amino-acid chain: uncharacterized protein (213 aa).

The span at 1–11 (MFATKDPEFEN) shows a compositional bias: basic and acidic residues. Disordered regions lie at residues 1-21 (MFAT…SPRN) and 63-98 (LRNK…EQAW). A compositionally biased stretch (polar residues) spans 12 to 21 (RINTNKSPRN). Positions 63–93 (LRNKAPKNEETKHEEHTPDNHEETDHHEAKQ) are enriched in basic and acidic residues.

This is an uncharacterized protein from Escherichia coli (strain K12).